A 159-amino-acid polypeptide reads, in one-letter code: Nutritionally-regulated adipose and cardiac-enriched protein homolog (159 aa).

The interval 1–67 (MKTAVHALSP…GDEPRRTTRH (67 aa)) is disordered. Basic and acidic residues-rich tracts occupy residues 12–25 (SRPETQHQTRKNEE) and 50–63 (SPQERCGRGDEPRR). The helical transmembrane segment at 107–124 (LTACILLALALGMCCGQA) threads the bilayer.

The protein localises to the cell membrane. This chain is Nutritionally-regulated adipose and cardiac-enriched protein homolog (NRAC), found in Bos taurus (Bovine).